Reading from the N-terminus, the 517-residue chain is Crotonobetaine/carnitine--CoA ligase (517 aa).

This sequence belongs to the ATP-dependent AMP-binding enzyme family.

The catalysed reaction is 4-(trimethylamino)butanoate + ATP + CoA = 4-(trimethylamino)butanoyl-CoA + AMP + diphosphate. The enzyme catalyses crotonobetaine + ATP + CoA = crotonobetainyl-CoA + AMP + diphosphate. It carries out the reaction (R)-carnitine + ATP + CoA = (R)-carnitinyl-CoA + AMP + diphosphate. The protein operates within amine and polyamine metabolism; carnitine metabolism. Catalyzes the transfer of CoA to carnitine, generating the initial carnitinyl-CoA needed for the CaiB reaction cycle. Also has activity toward crotonobetaine and gamma-butyrobetaine. The chain is Crotonobetaine/carnitine--CoA ligase from Escherichia coli O127:H6 (strain E2348/69 / EPEC).